The chain runs to 112 residues: Cytochrome c (112 aa).

Residues cysteine 23, cysteine 26, histidine 27, and methionine 89 each contribute to the heme c site.

This sequence belongs to the cytochrome c family. In terms of processing, binds 1 heme c group covalently per subunit.

The protein resides in the mitochondrion intermembrane space. Functionally, electron carrier protein. The oxidized form of the cytochrome c heme group can accept an electron from the heme group of the cytochrome c1 subunit of cytochrome reductase. Cytochrome c then transfers this electron to the cytochrome oxidase complex, the final protein carrier in the mitochondrial electron-transport chain. The sequence is that of Cytochrome c (CYC1) from Chlamydomonas reinhardtii (Chlamydomonas smithii).